We begin with the raw amino-acid sequence, 301 residues long: GTPase Era (301 aa).

Residues 7-175 (YCGFIAIVGR…AAIVRKHLPE (169 aa)) enclose the Era-type G domain. The tract at residues 15–22 (GRPNVGKS) is G1. 15–22 (GRPNVGKS) is a GTP binding site. Positions 41 to 45 (QTTRH) are G2. Residues 62–65 (DTPG) form a G3 region. GTP is bound by residues 62–66 (DTPGL) and 124–127 (NKVD). The G4 stretch occupies residues 124 to 127 (NKVD). Residues 154-156 (ISA) are G5. The region spanning 206–283 (LGAELPYSVT…HLELWVKVKS (78 aa)) is the KH type-2 domain.

The protein belongs to the TRAFAC class TrmE-Era-EngA-EngB-Septin-like GTPase superfamily. Era GTPase family. As to quaternary structure, monomer.

It localises to the cytoplasm. It is found in the cell inner membrane. In terms of biological role, an essential GTPase that binds both GDP and GTP, with rapid nucleotide exchange. Plays a role in 16S rRNA processing and 30S ribosomal subunit biogenesis and possibly also in cell cycle regulation and energy metabolism. The polypeptide is GTPase Era (Escherichia coli O157:H7).